The sequence spans 446 residues: Glutamine synthetase (446 aa).

Residues 15-102 (RDIRFVRLWF…MFCDITMPDG (88 aa)) form the GS beta-grasp domain. In terms of domain architecture, GS catalytic spans 109 to 446 (PRHVLRRQLT…PYELRTYLSL (338 aa)). Mg(2+) is bound by residues Glu132 and Glu134. Glu184 lines the ATP pocket. Glu189 and Glu196 together coordinate Mg(2+). An L-glutamate-binding site is contributed by Gly241. A Mg(2+)-binding site is contributed by His245. ATP-binding positions include 247-249 (HMS) and Ser249. Residues Arg298, Glu304, and Arg316 each contribute to the L-glutamate site. ATP-binding residues include Arg316 and Arg321. Residue Glu336 participates in Mg(2+) binding. Position 338 (Arg338) interacts with L-glutamate.

This sequence belongs to the glutamine synthetase family. Oligomer of 12 subunits arranged in the form of two hexagons. In its feedback-inhibited form, interacts with TnrA in order to block its DNA-binding activity. The cofactor is Mg(2+).

It localises to the cytoplasm. It catalyses the reaction L-glutamate + NH4(+) + ATP = L-glutamine + ADP + phosphate + H(+). Its activity is regulated as follows. Inhibited by glutamine. Glutamine synthetase (GS) is an unusual multitasking protein that functions as an enzyme, a transcription coregulator, and a chaperone in ammonium assimilation and in the regulation of genes involved in nitrogen metabolism. It catalyzes the ATP-dependent biosynthesis of glutamine from glutamate and ammonia. Feedback-inhibited GlnA also interacts with and regulates the activity of the transcriptional regulator TnrA. During nitrogen limitation, TnrA is in its DNA-binding active state and turns on the transcription of genes required for nitrogen assimilation. Under conditions of nitrogen excess, feedback-inhibited GlnA forms a stable complex with TnrA, which inhibits its DNA-binding activity. In contrast, feedback-inhibited GlnA acts as a chaperone to stabilize the DNA-binding activity of GlnR, which represses the transcription of nitrogen assimilation genes. The chain is Glutamine synthetase from Mycobacterium bovis (strain ATCC BAA-935 / AF2122/97).